Here is a 148-residue protein sequence, read N- to C-terminus: UPF0178 protein lpl0088 (148 aa).

The protein belongs to the UPF0178 family.

This chain is UPF0178 protein lpl0088, found in Legionella pneumophila (strain Lens).